We begin with the raw amino-acid sequence, 141 residues long: Large ribosomal subunit protein uL11c (141 aa).

It belongs to the universal ribosomal protein uL11 family. Part of the ribosomal stalk of the 50S ribosomal subunit. Interacts with L10 and the large rRNA to form the base of the stalk. L10 forms an elongated spine to which L12 dimers bind in a sequential fashion forming a multimeric L10(L12)X complex.

The protein localises to the plastid. Its subcellular location is the chloroplast. Functionally, forms part of the ribosomal stalk which helps the ribosome interact with GTP-bound translation factors. The chain is Large ribosomal subunit protein uL11c from Cyanidium caldarium (Red alga).